Consider the following 488-residue polypeptide: Receptor-like tyrosine-protein kinase kin-15 (488 aa).

A signal peptide spans 1–26 (MCLKMRYERIKYILLFSLMHLVYSNS). N-linked (GlcNAc...) asparagine glycosylation occurs at asparagine 25. The Extracellular portion of the chain corresponds to 27-50 (TFESFTENPHISSQISNVLYMDQM). A helical transmembrane segment spans residues 51-70 (FIIYILICILLILISVIVYL). At 71–488 (SKRYSQQMMQ…SKLEDWIRRD (418 aa)) the chain is on the cytoplasmic side. Residues 144–458 (EISEDKLGSG…VEFFEEHLSV (315 aa)) enclose the Protein kinase domain. Residues 150–158 (LGSGFFGEV) and lysine 183 each bind ATP. Residue aspartate 319 is the Proton acceptor of the active site.

It belongs to the protein kinase superfamily. Tyr protein kinase family. In terms of tissue distribution, hypodermal cells.

Its subcellular location is the cell membrane. It catalyses the reaction L-tyrosyl-[protein] + ATP = O-phospho-L-tyrosyl-[protein] + ADP + H(+). In terms of biological role, may be specifically involved in cell-cell interactions regulating cell fusions that generate the hypodermis during postembryonic development. It has a role in the development of the HYP7 hypodermal syncytium. The sequence is that of Receptor-like tyrosine-protein kinase kin-15 (kin-15) from Caenorhabditis elegans.